The sequence spans 1238 residues: Virulence sensor protein BvgS (1238 aa).

Residues 1 to 32 (MPAPHRLYPRSLICLAQALLVWALLAWAPAQA) form the signal peptide. Residues 33–307 (SQELTLVGKA…REQQWMANHP (275 aa)) are Cytoplasmic-facing. Residues 308 to 331 (VVKVAVLNLFAPFTLFRTDEQFGG) traverse the membrane as a helical segment. The Periplasmic portion of the chain corresponds to 332 to 541 (ISAAVLQLLQ…PRTWYAYRNE (210 aa)). A helical membrane pass occupies residues 542-563 (IYLLIGLGLLSALLFLSWIVYL). Topologically, residues 564–1238 (RRQIRQRKRA…LEQRPHQGQP (675 aa)) are cytoplasmic. Residues 580–651 (QLEFMRVLID…MHEFLLTRMA (72 aa)) form the PAS domain. Positions 652-708 (AEREPRFEDRDVTLHGRTRHVYQWTVPYGDSLGELKGIIGGWIDITERAELLRELHD) constitute a PAC domain. Residues 726–948 (TMSHEIRTPM…TVSVDLRLTM (223 aa)) form the Histidine kinase domain. Phosphohistidine; by autocatalysis is present on His729. The Response regulatory domain occupies 974–1095 (RVLVVDDHKP…ALRQRLNEAA (122 aa)). The residue at position 1023 (Asp1023) is a 4-aspartylphosphate. The HPt domain occupies 1133 to 1228 (DEALIRQLLE…AALETQLRAW (96 aa)). Phosphohistidine is present on His1172.

In terms of processing, activation requires a sequential transfer of a phosphate group from a His in the primary transmitter domain, to an Asp in the receiver domain and to a His in the secondary transmitter domain.

It localises to the cell inner membrane. The catalysed reaction is ATP + protein L-histidine = ADP + protein N-phospho-L-histidine.. In terms of biological role, member of the two-component regulatory system BvgS/BvgA. Phosphorylates BvgA via a four-step phosphorelay in response to environmental signals. This is Virulence sensor protein BvgS (bvgS) from Bordetella parapertussis (strain 12822 / ATCC BAA-587 / NCTC 13253).